An 891-amino-acid polypeptide reads, in one-letter code: MATQIDASSEAAAATAAAQHTPMMQQYLRIKSEHPDTLVFYRMGDFYELFFEDAEKAARLLDLTLTQRGASAGTPIKMAGVPHHAVEQYLAKLVKFGESAAICEQIGDPATSKGPVERKVVRVVTPGTLTDAALLSDKSDVFLLALCVGHNKRGVASNIGLAWLNLASGALRLAELAPDQLGAALERIRPAEILAADGTIESVPAGMGAITRVPAWHFDIASGTQRLCDQLEVASLDGFGAQALTSANGAAGALLIYAAATQGQQLRHVRSLKVENESEYIGLDPSTRRNLELTETLRGTESPTLYSLLDTCCTAMGSRLLRHWLHHPPRASVAAQARHQAIGALLDAPPNAGLDSLRSALRQIADVERITGRLALLSARPRDLSSLRDTFAALPALRERVAEIASNAAALGRLGAALEPPPGCLDLLTRAIAAEPAAMVRDGGVIARGYDAELDELRDISENCGQFLIDLETRERARTGISNLRVEYNKVHGFYIEVTRGQTDKVPDDYRRRQTLKNAERYITPELKTFEDKALSAQERALARERALYDGVLQALLPHIEGCQRVASGLAELDLLAAFAERARTLDWVAPEFTDEIGIEIDQGRHPVVEAQVEQFIANDCALNPERKLLLITGPNMGGKSTFMRQTALIALMAYVGSYVPAKAARFGPIDRIFTRIGAADDLAGGRSTFMVEMTEAAAILNDATPHSLVLMDEIGRGTSTFDGLALAWAIARHLLSHNRCYTLFATHYFELTQLPAEFPQAANVHLSAVEHGHGIVFLHAVEEGPANQSYGLQVAQLAGVPAPVIRAARKHLAHLEQQSAAQATPQLDLFAAPTVVDEPECNEPPAAATPHPALERLLELDPDDLKPRDALDLLYELHTLARSGPADAQR.

634-641 (GPNMGGKS) lines the ATP pocket.

This sequence belongs to the DNA mismatch repair MutS family.

This protein is involved in the repair of mismatches in DNA. It is possible that it carries out the mismatch recognition step. This protein has a weak ATPase activity. This is DNA mismatch repair protein MutS from Burkholderia pseudomallei (strain 668).